The following is an 824-amino-acid chain: Frameshifted structural polyprotein (824 aa).

Residues 1–10 (MEFIPTQTFY) are compositionally biased toward polar residues. The segment at 1–104 (MEFIPTQTFY…KKKKPGRRER (104 aa)) is disordered. The segment covering 22-44 (RPTIQVIRPRPRPQRQAGQLAQL) has biased composition (low complexity). The tract at residues 36–68 (RQAGQLAQLISAVNKLTMRAVPQQKPRKNRKNK) is host transcription inhibition. A compositionally biased stretch (basic residues) spans 60-72 (KPRKNRKNKKQKQ). A Nuclear localization signal motif is present at residues 61–99 (PRKNRKNKKQKQKQQAPQNNTNQKKQPPKKKPAQKKKKP). A compositionally biased stretch (low complexity) spans 73–85 (KQQAPQNNTNQKK). The interval 84–114 (KKQPPKKKPAQKKKKPGRRERMCMKIENDCI) is binding to the viral RNA. Positions 86–101 (QPPKKKPAQKKKKPGR) are enriched in basic residues. 2 ribosome-binding regions span residues 91–100 (KPAQKKKKPG) and 99–113 (PGRRERMCMKIENDC). C113 and C128 are disulfide-bonded. Positions 113–261 (CIFEVKHEGK…KITPEGAEEW (149 aa)) constitute a Peptidase S3 domain. H139 serves as the catalytic Charge relay system. The Nuclear export signal motif lies at 144–154 (IDNADLAKLAF). D161 (charge relay system) is an active-site residue. The interval 183-193 (PEGYYNWHHGA) is dimerization of the capsid protein. S213 functions as the Charge relay system in the catalytic mechanism. Residues 219 to 223 (DNKGR) are dimerization of the capsid protein. Residues 262–274 (SLAIPVMCLLANT) are functions as an uncleaved signal peptide for the precursor of protein E3/E2. Residues 262-692 (SLAIPVMCLL…YYYELYPTMT (431 aa)) lie on the Extracellular side of the membrane. N273, N588, and N670 each carry an N-linked (GlcNAc...) asparagine; by host glycan. The helical transmembrane segment at 693 to 713 (VVVVSVASFILLSMVGMAVGM) threads the bilayer. At 714-748 (CMCARRRCITPYELTPGATVPFLLSLICCIRTAKA) the chain is on the cytoplasmic side. 3 S-palmitoyl cysteine; by host lipidation sites follow: C721, C741, and C742. Residues 721-741 (CITPYELTPGATVPFLLSLIC) form a transient transmembrane before p62-6K protein processing region. At 749–763 (ATYQEAAVYLWNEQQ) the chain is on the extracellular side. The helical transmembrane segment at 764 to 784 (PLFWLQALIPLAALIVLCNCL) threads the bilayer. Topologically, residues 785 to 795 (RLLPCCCKTLA) are cytoplasmic.

This sequence belongs to the alphavirus frameshifted structural polyprotein family. Homodimer. Homomultimer. Interacts with host karyopherin KPNA4; this interaction allows the nuclear import of the viral capsid protein. Interacts with spike glycoprotein E2. Interacts with host IRAK1; the interaction leads to inhibition of IRAK1-dependent signaling. As to quaternary structure, the precursor of protein E3/E2 and E1 form a heterodimer shortly after synthesis. In terms of assembly, processing of the precursor of protein E3/E2 into E2 and E3 results in a heterodimer of the spike glycoproteins E2 and E1. Spike at virion surface are constituted of three E2-E1 heterodimers. Interacts with 6K protein. Interacts with host MXRA8; this interaction mediates virus entry. Specific enzymatic cleavages in vivo yield mature proteins. Capsid protein is auto-cleaved during polyprotein translation, unmasking a signal peptide at the N-terminus of the precursor of E3/E2. The remaining polyprotein is then targeted to the host endoplasmic reticulum, where host signal peptidase cleaves it into pE2 and TF. pE2 is further processed to mature E3 and E2 by host furin in trans-Golgi vesicle. In terms of processing, palmitoylated via thioester bonds. These palmitoylations may induce disruption of the C-terminus transmembrane. This would result in the reorientation of E2 C-terminus from lumenal to cytoplasmic side. Post-translationally, palmitoylated via thioester bonds.

The protein localises to the virion. Its subcellular location is the host cytoplasm. The protein resides in the host cell membrane. It is found in the host nucleus. It localises to the virion membrane. It catalyses the reaction Autocatalytic release of the core protein from the N-terminus of the togavirus structural polyprotein by hydrolysis of a -Trp-|-Ser- bond.. Forms an icosahedral capsid with a T=4 symmetry composed of 240 copies of the capsid protein surrounded by a lipid membrane through which penetrate 80 spikes composed of trimers of E1-E2 heterodimers. The capsid protein binds to the viral RNA genome at a site adjacent to a ribosome binding site for viral genome translation following genome release. Possesses a protease activity that results in its autocatalytic cleavage from the nascent structural protein. Following its self-cleavage, the capsid protein transiently associates with ribosomes, and within several minutes the protein binds to viral RNA and rapidly assembles into icosahedric core particles. The resulting nucleocapsid eventually associates with the cytoplasmic domain of the spike glycoprotein E2 at the cell membrane, leading to budding and formation of mature virions. In case of infection, new virions attach to target cells and after clathrin-mediated endocytosis their membrane fuses with the host endosomal membrane. This leads to the release of the nucleocapsid into the cytoplasm, followed by an uncoating event necessary for the genomic RNA to become accessible. The uncoating might be triggered by the interaction of capsid proteins with ribosomes. Binding of ribosomes would release the genomic RNA since the same region is genomic RNA-binding and ribosome-binding. Specifically inhibits interleukin-1 receptor-associated kinase 1/IRAK1-dependent signaling during viral entry, representing a means by which the alphaviruses may evade innate immune detection and activation prior to viral gene expression. In terms of biological role, provides the signal sequence for the translocation of the precursor of protein E3/E2 to the host endoplasmic reticulum. Furin-cleaved E3 remains associated with spike glycoprotein E1 and mediates pH protection of the latter during the transport via the secretory pathway. After virion release from the host cell, the assembly protein E3 is gradually released in the extracellular space. Its function is as follows. Plays a role in viral attachment to target host cell, by binding to the cell receptor. Synthesized as a p62 precursor which is processed by furin at the cell membrane just before virion budding, giving rise to E2-E1 heterodimer. The p62-E1 heterodimer is stable, whereas E2-E1 is unstable and dissociate at low pH. p62 is processed at the last step, presumably to avoid E1 fusion activation before its final export to cell surface. E2 C-terminus contains a transitory transmembrane that would be disrupted by palmitoylation, resulting in reorientation of the C-terminal tail from lumenal to cytoplasmic side. This step is critical since E2 C-terminus is involved in budding by interacting with capsid proteins. This release of E2 C-terminus in cytoplasm occurs lately in protein export, and precludes premature assembly of particles at the endoplasmic reticulum membrane. Functionally, plays a role in viral assembly and release. The sequence is that of Frameshifted structural polyprotein from Aedes aegypti (Yellowfever mosquito).